Reading from the N-terminus, the 225-residue chain is Protein ERP3 (225 aa).

The signal sequence occupies residues 1-23 (MSNLCVLFFQFFFLAQFFAEASP). Over 24-195 (LTFELNKGRK…STEHRIVMFS (172 aa)) the chain is Lumenal. The GOLD domain occupies 33 to 172 (KECLYTLTPE…LHVLERNIQY (140 aa)). Positions 129–138 (ERRKARKAQR) are enriched in basic residues. Residues 129–149 (ERRKARKAQRNLRDSKTDPLQ) are disordered. A helical transmembrane segment spans residues 196-216 (IYGILLIIGMSCAQIAILEFI). Residues 217 to 225 (FRESRKHNV) are Cytoplasmic-facing.

This sequence belongs to the EMP24/GP25L family.

Its subcellular location is the endoplasmic reticulum membrane. Its function is as follows. Involved in vesicular protein trafficking. The sequence is that of Protein ERP3 (ERP3) from Saccharomyces cerevisiae (strain ATCC 204508 / S288c) (Baker's yeast).